Reading from the N-terminus, the 1497-residue chain is Collagen alpha-2(V) chain (1497 aa).

A signal peptide spans 1 to 26 (MMANWVGARPLLILSVLLGYCVSIKA). Positions 38-96 (IACTQHGQMYLNRDIWKPSPCQICVCDNGAILCDKIECPEVLNCANPITPTGECCPVCP) constitute a VWFC domain. The interval 103-1265 (TSFGRGRKGQ…PDDTNKTDPG (1163 aa)) is disordered. The Cell attachment site motif lies at 141–143 (RGD). The segment covering 155–164 (PQGIDGEPGV) has biased composition (low complexity). Positions 168–180 (PGAPGPPGHPSHP) are enriched in pro residues. The span at 210 to 225 (PGSVGPVGPRGPQGLQ) shows a compositional bias: low complexity. Positions 234–246 (AGPPGEPGEPGPM) are enriched in pro residues. 3 positions are modified to 4-hydroxyproline: Pro288, Pro291, and Pro294. Low complexity-rich tracts occupy residues 320 to 338 (EAGP…PRGM) and 425 to 441 (TPGA…SGPP). Residues 504–506 (RGD) carry the Cell attachment site motif. Gly residues predominate over residues 550-559 (GPKGGQGDPG). The span at 602–611 (SIGIRGQPGS) shows a compositional bias: low complexity. 2 positions are modified to 4-hydroxyproline: Pro609 and Pro615. The segment covering 708 to 719 (RGERGNPGERGE) has biased composition (basic and acidic residues). Positions 730 to 739 (GMAGGHGPDG) are enriched in gly residues. The span at 744 to 756 (PGPTGTIGDTGPP) shows a compositional bias: low complexity. Basic and acidic residues predominate over residues 774 to 785 (KGDRGGIGEKGA). 2 stretches are compositionally biased toward low complexity: residues 824–839 (PPGS…ENGP) and 878–891 (LAGS…HGVP). Positions 892-901 (GLKGGRGTQG) are enriched in gly residues. Over residues 917–927 (PPGPAGAPGPA) the composition is skewed to pro residues. Short sequence motifs (cell attachment site) lie at residues 942–944 (RGD), 1065–1067 (RGD), and 1068–1070 (RGD). Positions 1061-1070 (AVGERGDRGD) are enriched in basic and acidic residues. The span at 1091–1112 (APGDAGQRGEPGSRGPVGPPGR) shows a compositional bias: low complexity. 2 short sequence motifs (cell attachment site) span residues 1125-1127 (RGD) and 1134-1136 (RGD). Residues 1125-1139 (RGDKGDNGDRGDRGQ) show a composition bias toward basic and acidic residues. 2 stretches are compositionally biased toward pro residues: residues 1169–1179 (PFGPRGPPGPV) and 1209–1224 (EGPP…PGPP). A propeptide spans 1228-1497 (TAALGDIMGH…GLDIGPVCFM (270 aa)) (C-terminal propeptide). N-linked (GlcNAc...) asparagine glycosylation occurs at Asn1260. The Fibrillar collagen NC1 domain maps to 1264 to 1497 (PGIHVTLKSL…GLDIGPVCFM (234 aa)). Intrachain disulfides connect Cys1294-Cys1326, Cys1334-Cys1495, and Cys1403-Cys1448. 4 residues coordinate Ca(2+): Asp1312, Asn1314, Gln1315, and Asp1320. Residue Asn1398 is glycosylated (N-linked (GlcNAc...) asparagine).

It belongs to the fibrillar collagen family. In terms of assembly, trimers of two alpha 1(V) and one alpha 2(V) chains expressed in most tissues and trimers of one alpha 1(V), one alpha 2(V), and one alpha 3(V) chains with a more limited distribution of expression. Prolines at the third position of the tripeptide repeating unit (G-X-P) are hydroxylated in some or all of the chains. Probably 3-hydroxylated on prolines by LEPREL1. Post-translationally, hydroxylation on proline residues within the sequence motif, GXPG, is most likely to be 4-hydroxy as this fits the requirement for 4-hydroxylation in vertebrates.

Its subcellular location is the secreted. The protein localises to the extracellular space. It is found in the extracellular matrix. In terms of biological role, type V collagen is a member of group I collagen (fibrillar forming collagen). It is a minor connective tissue component of nearly ubiquitous distribution. Type V collagen binds to DNA, heparan sulfate, thrombospondin, heparin, and insulin. Type V collagen is a key determinant in the assembly of tissue-specific matrices. This is Collagen alpha-2(V) chain from Mus musculus (Mouse).